The primary structure comprises 456 residues: Gamma-aminobutyric acid receptor subunit alpha-1 (456 aa).

An N-terminal signal peptide occupies residues 1 to 27 (MRKSPGLSDYLWAWILLLSTLTGRSYG). The Extracellular segment spans residues 28-253 (QPSLQDELKD…FHLKRKIGYF (226 aa)). An N-linked (GlcNAc...) asparagine glycan is attached at N38. R94 serves as a coordination point for 4-aminobutanoate. N-linked (GlcNAc...) asparagine glycosylation occurs at N138. T157 contacts 4-aminobutanoate. Cysteines 166 and 180 form a disulfide. The helical transmembrane segment at 254-274 (VIQTYLPCIMTVILSQVSFWL) threads the bilayer. At 275 to 279 (NRESV) the chain is on the cytoplasmic side. The chain crosses the membrane as a helical span at residues 280 to 301 (PARTVFGVTTVLTMTTLSISAR). The Extracellular portion of the chain corresponds to 302-311 (NSLPKVAYAT). Residues 312 to 333 (AMDWFIAVCYAFVFSALIEFAT) form a helical membrane-spanning segment. Residues 334 to 421 (VNYFTKRGYA…TFNSVSKIDR (88 aa)) lie on the Cytoplasmic side of the membrane. A helical transmembrane segment spans residues 422-441 (LSRIAFPLLFGIFNLVYWAT). At 442-456 (YLNREPQLKAPTPHQ) the chain is on the extracellular side.

Belongs to the ligand-gated ion channel (TC 1.A.9) family. Gamma-aminobutyric acid receptor (TC 1.A.9.5) subfamily. GABRA1 sub-subfamily. In terms of assembly, heteropentamer, formed by a combination of alpha (GABRA1-6), beta (GABRB1-3), gamma (GABRG1-3), delta (GABRD), epsilon (GABRE), rho (GABRR1-3), pi (GABRP) and theta (GABRQ) subunits, each subunit exhibiting distinct physiological and pharmacological properties. Interacts with UBQLN1. Interacts with TRAK1. Interacts with KIF21B. Identified in a complex of 720 kDa composed of LHFPL4, NLGN2, GABRA1, GABRB2, GABRG2 and GABRB3. Interacts with LHFPL4. Interacts with NLGN2. Interacts with SHISA7; interaction leads to the regulation of GABA(A) receptor trafficking, channel deactivation kinetics and pharmacology.

The protein localises to the postsynaptic cell membrane. The protein resides in the cell membrane. It is found in the cytoplasmic vesicle membrane. The catalysed reaction is chloride(in) = chloride(out). Its activity is regulated as follows. Allosterically activated by benzodiazepines, the neuroanesthetic alphaxalone and pentobarbital. Inhibited by the antagonist bicuculline. Potentiated by histamine. In terms of biological role, alpha subunit of the heteropentameric ligand-gated chloride channel gated by gamma-aminobutyric acid (GABA), a major inhibitory neurotransmitter in the brain. GABA-gated chloride channels, also named GABA(A) receptors (GABAAR), consist of five subunits arranged around a central pore and contain GABA active binding site(s) located at the alpha and beta subunit interface(s). When activated by GABA, GABAARs selectively allow the flow of chloride anions across the cell membrane down their electrochemical gradient. Alpha-1/GABRA1-containing GABAARs are largely synaptic. Chloride influx into the postsynaptic neuron following GABAAR opening decreases the neuron ability to generate a new action potential, thereby reducing nerve transmission. GABAARs containing alpha-1 and beta-2 or -3 subunits exhibit synaptogenic activity; the gamma-2 subunit being necessary but not sufficient to induce rapid synaptic contacts formation. GABAARs function also as histamine receptor where histamine binds at the interface of two neighboring beta subunits and potentiates GABA response. GABAARs containing alpha, beta and epsilon subunits also permit spontaneous chloride channel activity while preserving the structural information required for GABA-gated openings. Alpha-1-mediated plasticity in the orbitofrontal cortex regulates context-dependent action selection. Together with rho subunits, may also control neuronal and glial GABAergic transmission in the cerebellum. The sequence is that of Gamma-aminobutyric acid receptor subunit alpha-1 (GABRA1) from Macaca fascicularis (Crab-eating macaque).